The chain runs to 623 residues: uncharacterized protein (623 aa).

The 144-residue stretch at 28–171 folds into the GAF domain; that stretch reads TSAEVSQRVL…TIATLFAQVQ (144 aa). In terms of domain architecture, GGDEF spans 212 to 345; that stretch reads GPVAALFLDL…GGDSVAIFTA (134 aa). An EAL domain is found at 354-609; it reads RNDIELHLRR…AMRHMLSARR (256 aa).

This is an uncharacterized protein from Mycobacterium tuberculosis (strain CDC 1551 / Oshkosh).